The sequence spans 502 residues: Lysine--tRNA ligase (502 aa).

The Mg(2+) site is built by E413 and E420.

This sequence belongs to the class-II aminoacyl-tRNA synthetase family. In terms of assembly, homodimer. Requires Mg(2+) as cofactor.

It localises to the cytoplasm. It catalyses the reaction tRNA(Lys) + L-lysine + ATP = L-lysyl-tRNA(Lys) + AMP + diphosphate. This Haemophilus influenzae (strain PittEE) protein is Lysine--tRNA ligase.